Reading from the N-terminus, the 204-residue chain is Outer-membrane lipoprotein carrier protein (204 aa).

An N-terminal signal peptide occupies residues 1–21 (MKKIAIVGALLTSFVASSVWA). The segment at 169–204 (QRSSYQLKSQQNGAIDASKFTFTPPQGVTVDDQRNK) is disordered. The span at 171–181 (SSYQLKSQQNG) shows a compositional bias: polar residues.

Belongs to the LolA family. In terms of assembly, monomer.

It localises to the periplasm. In terms of biological role, participates in the translocation of lipoproteins from the inner membrane to the outer membrane. Only forms a complex with a lipoprotein if the residue after the N-terminal Cys is not an aspartate (The Asp acts as a targeting signal to indicate that the lipoprotein should stay in the inner membrane). This chain is Outer-membrane lipoprotein carrier protein, found in Enterobacter sp. (strain 638).